A 101-amino-acid chain; its full sequence is Small ribosomal subunit protein uS14 (101 aa).

Belongs to the universal ribosomal protein uS14 family. Part of the 30S ribosomal subunit. Contacts proteins S3 and S10.

In terms of biological role, binds 16S rRNA, required for the assembly of 30S particles and may also be responsible for determining the conformation of the 16S rRNA at the A site. This chain is Small ribosomal subunit protein uS14, found in Alkalilimnicola ehrlichii (strain ATCC BAA-1101 / DSM 17681 / MLHE-1).